Here is a 510-residue protein sequence, read N- to C-terminus: Secreted RxLR effector protein 108 (510 aa).

The first 20 residues, 1 to 20 (MRGAYYVLTALFVVTSSDIA), serve as a signal peptide directing secretion. N-linked (GlcNAc...) asparagine glycosylation occurs at N47. A RxLR-dEER motif is present at residues 48–65 (RSLRGSRDGRNDLANEER). Disordered regions lie at residues 111 to 139 (RAAKAVEEKSRPAKAAKKTPRAAKAAKKT) and 386 to 442 (KRSR…DDPK). A compositionally biased stretch (basic residues) spans 122–137 (PAKAAKKTPRAAKAAK). Positions 393–405 (DGNTDTASLPSKQ) are enriched in polar residues. The segment covering 429–442 (VPTKEIKSSFDDPK) has biased composition (basic and acidic residues).

It belongs to the RxLR effector family.

Its subcellular location is the secreted. The protein resides in the host nucleus. Secreted effector that completely suppresses the host cell death induced by cell death-inducing proteins. This Plasmopara viticola (Downy mildew of grapevine) protein is Secreted RxLR effector protein 108.